A 169-amino-acid polypeptide reads, in one-letter code: S-ribosylhomocysteine lyase (169 aa).

Histidine 54, histidine 58, and cysteine 129 together coordinate Fe cation.

Belongs to the LuxS family. Homodimer. Fe cation is required as a cofactor.

It catalyses the reaction S-(5-deoxy-D-ribos-5-yl)-L-homocysteine = (S)-4,5-dihydroxypentane-2,3-dione + L-homocysteine. Its function is as follows. Involved in the synthesis of autoinducer 2 (AI-2) which is secreted by bacteria and is used to communicate both the cell density and the metabolic potential of the environment. The regulation of gene expression in response to changes in cell density is called quorum sensing. Catalyzes the transformation of S-ribosylhomocysteine (RHC) to homocysteine (HC) and 4,5-dihydroxy-2,3-pentadione (DPD). The sequence is that of S-ribosylhomocysteine lyase from Haemophilus ducreyi (strain 35000HP / ATCC 700724).